The sequence spans 568 residues: Protein downstream neighbor of son homolog (568 aa).

Disordered regions lie at residues 28–48 (NKLA…QVDE) and 311–355 (MPLK…DDDE). Over residues 315–335 (SDNSGNAHDNSFNEESTTTSL) the composition is skewed to polar residues.

It belongs to the DONSON family. As to expression, expression peaks during late G1 and S phase (at protein level).

It localises to the nucleus. Functionally, essential for DNA amplification in the ovary and required for cell proliferation during development. This is Protein downstream neighbor of son homolog (hd) from Drosophila melanogaster (Fruit fly).